The primary structure comprises 167 residues: uncharacterized protein (167 aa).

The N-terminal stretch at 1–25 is a signal peptide; sequence MPFSVTKFSLIFVALLLAEALVAQS.

This is an uncharacterized protein from Caenorhabditis elegans.